The chain runs to 209 residues: Probable nicotinate-nucleotide adenylyltransferase (209 aa).

This sequence belongs to the NadD family.

It catalyses the reaction nicotinate beta-D-ribonucleotide + ATP + H(+) = deamido-NAD(+) + diphosphate. It functions in the pathway cofactor biosynthesis; NAD(+) biosynthesis; deamido-NAD(+) from nicotinate D-ribonucleotide: step 1/1. Its function is as follows. Catalyzes the reversible adenylation of nicotinate mononucleotide (NaMN) to nicotinic acid adenine dinucleotide (NaAD). This chain is Probable nicotinate-nucleotide adenylyltransferase, found in Hydrogenovibrio crunogenus (strain DSM 25203 / XCL-2) (Thiomicrospira crunogena).